The following is a 377-amino-acid chain: DNA replication and repair protein RecF (377 aa).

ATP is bound at residue 30 to 37; sequence GLNGSGKT.

Belongs to the RecF family.

It is found in the cytoplasm. Its function is as follows. The RecF protein is involved in DNA metabolism; it is required for DNA replication and normal SOS inducibility. RecF binds preferentially to single-stranded, linear DNA. It also seems to bind ATP. In Cytophaga hutchinsonii (strain ATCC 33406 / DSM 1761 / CIP 103989 / NBRC 15051 / NCIMB 9469 / D465), this protein is DNA replication and repair protein RecF.